The chain runs to 471 residues: Putative ABC transporter ATP-binding protein STK_11360 (471 aa).

ABC transporter domains follow at residues Leu-4 to Leu-241 and Val-255 to Asp-470. ATP-binding positions include Gly-37 to Ser-44 and Gly-286 to Ser-293.

Belongs to the ABC transporter superfamily.

The protein resides in the cell membrane. Probably part of an ABC transporter complex. Responsible for energy coupling to the transport system. The sequence is that of Putative ABC transporter ATP-binding protein STK_11360 from Sulfurisphaera tokodaii (strain DSM 16993 / JCM 10545 / NBRC 100140 / 7) (Sulfolobus tokodaii).